A 159-amino-acid chain; its full sequence is Globin D, coelomic (159 aa).

G2 is subject to N-acetylglycine. The Globin domain occupies 12 to 158 (DLTPAEKDLI…VQGVLITKHA (147 aa)). Residues H74 and H105 each coordinate heme b.

Belongs to the globin family. Homodimer.

The polypeptide is Globin D, coelomic (Molpadia arenicola (Sea cucumber)).